Reading from the N-terminus, the 464-residue chain is UDP-glycosyltransferase 76C1 (464 aa).

UDP-alpha-D-glucose contacts are provided by residues serine 279, alanine 338 to glutamine 340, histidine 355 to glutamate 363, and lysine 377 to glutamine 380.

It belongs to the UDP-glycosyltransferase family.

With respect to regulation, inhibited by olomoucine and 3-isobutyl-1-methylxanthine. Functionally, involved in the N-glucosylation of cytokinins. Catalyzes the formation of both the 7-N and the 9-N-glucosides. The polypeptide is UDP-glycosyltransferase 76C1 (UGT76C1) (Arabidopsis thaliana (Mouse-ear cress)).